Reading from the N-terminus, the 747-residue chain is Probable alpha-galactosidase C (747 aa).

The N-terminal stretch at M1–A24 is a signal peptide. N-linked (GlcNAc...) asparagine glycans are attached at residues N36, N182, N190, N362, N429, and N449. Catalysis depends on D507, which acts as the Nucleophile. N-linked (GlcNAc...) asparagine glycosylation occurs at N534. D569 acts as the Proton donor in catalysis.

It belongs to the glycosyl hydrolase 36 family. Homotetramer. Requires Mg(2+) as cofactor. NAD(+) is required as a cofactor.

The protein localises to the secreted. The enzyme catalyses Hydrolysis of terminal, non-reducing alpha-D-galactose residues in alpha-D-galactosides, including galactose oligosaccharides, galactomannans and galactolipids.. In terms of biological role, hydrolyzes a variety of simple alpha-D-galactoside as well as more complex molecules such as oligosaccharides and polysaccharides. In Aspergillus terreus (strain NIH 2624 / FGSC A1156), this protein is Probable alpha-galactosidase C (aglC).